We begin with the raw amino-acid sequence, 330 residues long: Elongation factor Ts, mitochondrial (330 aa).

The N-terminal 16 residues, 1-16, are a transit peptide targeting the mitochondrion; the sequence is MYRNCRKAFTFSLRHY.

Belongs to the EF-Ts family.

Its subcellular location is the mitochondrion. Functionally, associates with the EF-Tu.GDP complex and induces the exchange of GDP to GTP. It remains bound to the aminoacyl-tRNA.EF-Tu.GTP complex up to the GTP hydrolysis stage on the ribosome. The sequence is that of Elongation factor Ts, mitochondrial from Laccaria bicolor (strain S238N-H82 / ATCC MYA-4686) (Bicoloured deceiver).